A 438-amino-acid polypeptide reads, in one-letter code: (3,5-dihydroxyphenyl)acetyl-CoA 1,2-dioxygenase (438 aa).

Residues Asp-183, Glu-189, 222-225 (HPRY), 233-238 (AGINLK), Gly-296, 325-327 (IPG), and Gln-416 each bind substrate.

It belongs to the enoyl-CoA hydratase/isomerase family. Homohexamer; dimer of trimers.

It carries out the reaction (3,5-dihydroxyphenyl)acetyl-CoA + O2 = 2-(3,5-dihydroxyphenyl)-2-oxoacetate + CoA + H(+). Its activity is regulated as follows. Inhibited by DPA-S-(N-acetylcysteamine). Its function is as follows. Involved in the biosynthesis of the nonproteinogenic amino acid monomer (S)-3,5-dihydroxyphenylglycine (Dpg) responsible of the production of vancomycin and teicoplanin antibiotics. Catalyzes the unusual conversion 3,5-dihydroxyphenylacetyl-CoA (DPA-CoA) to 3,5-dihydroxyphenylglyoxylate. DpgC performed a net four-electron oxidation of the benzylic carbon of DPA-CoA and the hydrolysis of the thioester bond to generate free CoA. DpgC has the ability to process a diverse range of substituted phenylacetyl-CoA substrates. The sequence is that of (3,5-dihydroxyphenyl)acetyl-CoA 1,2-dioxygenase from Streptomyces toyocaensis.